Reading from the N-terminus, the 216-residue chain is Adenylate kinase (216 aa).

Position 10 to 15 (10 to 15) interacts with ATP; the sequence is GAGKGT. The NMP stretch occupies residues 30–59; sequence STGDMFRAAMKAETEMGLQAKSFIDKGALV. Residues threonine 31, arginine 36, 57–59, 85–88, and glutamine 92 contribute to the AMP site; these read ALV and GFPR. Positions 126 to 163 are LID; the sequence is GRRICKECGATYHLEFNAPAKADVCDKCGGELYQRSDD. Position 127 (arginine 127) interacts with ATP. Zn(2+) contacts are provided by cysteine 130 and cysteine 133. 136–137 contacts ATP; the sequence is TY. Positions 150 and 153 each coordinate Zn(2+). 2 residues coordinate AMP: arginine 160 and arginine 171. Residue glutamine 199 participates in ATP binding.

This sequence belongs to the adenylate kinase family. As to quaternary structure, monomer.

The protein localises to the cytoplasm. The enzyme catalyses AMP + ATP = 2 ADP. It participates in purine metabolism; AMP biosynthesis via salvage pathway; AMP from ADP: step 1/1. In terms of biological role, catalyzes the reversible transfer of the terminal phosphate group between ATP and AMP. Plays an important role in cellular energy homeostasis and in adenine nucleotide metabolism. In Bacillus anthracis (strain A0248), this protein is Adenylate kinase.